A 259-amino-acid polypeptide reads, in one-letter code: Hydroxyacylglutathione hydrolase (259 aa).

H56, H58, D60, H61, H112, D133, and H171 together coordinate Zn(2+).

This sequence belongs to the metallo-beta-lactamase superfamily. Glyoxalase II family. In terms of assembly, monomer. The cofactor is Zn(2+).

It carries out the reaction an S-(2-hydroxyacyl)glutathione + H2O = a 2-hydroxy carboxylate + glutathione + H(+). The protein operates within secondary metabolite metabolism; methylglyoxal degradation; (R)-lactate from methylglyoxal: step 2/2. Its function is as follows. Thiolesterase that catalyzes the hydrolysis of S-D-lactoyl-glutathione to form glutathione and D-lactic acid. In Pseudomonas entomophila (strain L48), this protein is Hydroxyacylglutathione hydrolase.